A 61-amino-acid chain; its full sequence is Photosystem II reaction center X protein (61 aa).

Residues 26–46 traverse the membrane as a helical segment; the sequence is IGSFIAAALLIVIPATAFLIF.

It belongs to the PsbX family. Type 2 subfamily. As to quaternary structure, PSII consists of a core antenna complex that captures photons, and an electron transfer chain that converts photonic excitation into a charge separation. PSII forms dimeric complexes.

The protein localises to the cellular thylakoid membrane. In terms of biological role, involved in the binding and/or turnover of quinones at the Q(B) site of Photosystem II. The polypeptide is Photosystem II reaction center X protein (Prochlorococcus marinus (strain MIT 9215)).